The following is a 71-amino-acid chain: Conotoxin PnMEKL-032 (71 aa).

The N-terminal stretch at Met-1–Ala-19 is a signal peptide. A propeptide spanning residues Leu-20–Arg-46 is cleaved from the precursor. Intrachain disulfides connect Cys-48–Cys-62, Cys-55–Cys-66, and Cys-61–Cys-70.

The protein belongs to the conotoxin O2 superfamily. Expressed by the venom duct.

It localises to the secreted. In Conus pennaceus (Feathered cone), this protein is Conotoxin PnMEKL-032.